Reading from the N-terminus, the 201-residue chain is Peptidyl-tRNA hydrolase (201 aa).

Tyrosine 15 contributes to the tRNA binding site. Catalysis depends on histidine 20, which acts as the Proton acceptor. 3 residues coordinate tRNA: tyrosine 66, asparagine 68, and asparagine 114.

The protein belongs to the PTH family. In terms of assembly, monomer.

It localises to the cytoplasm. It carries out the reaction an N-acyl-L-alpha-aminoacyl-tRNA + H2O = an N-acyl-L-amino acid + a tRNA + H(+). In terms of biological role, hydrolyzes ribosome-free peptidyl-tRNAs (with 1 or more amino acids incorporated), which drop off the ribosome during protein synthesis, or as a result of ribosome stalling. Catalyzes the release of premature peptidyl moieties from peptidyl-tRNA molecules trapped in stalled 50S ribosomal subunits, and thus maintains levels of free tRNAs and 50S ribosomes. This Burkholderia thailandensis (strain ATCC 700388 / DSM 13276 / CCUG 48851 / CIP 106301 / E264) protein is Peptidyl-tRNA hydrolase.